The sequence spans 432 residues: Adenylosuccinate synthetase (432 aa).

GTP contacts are provided by residues 12–18 (GDEGKGK) and 40–42 (GHT). Aspartate 13 acts as the Proton acceptor in catalysis. The Mg(2+) site is built by aspartate 13 and glycine 40. IMP is bound by residues 13 to 16 (DEGK), 38 to 41 (NAGH), threonine 130, arginine 144, glutamine 225, threonine 240, and arginine 304. Catalysis depends on histidine 41, which acts as the Proton donor. 300–306 (ATTGRRR) contacts substrate. GTP contacts are provided by residues arginine 306, 332-334 (KLD), and 415-417 (SVG).

It belongs to the adenylosuccinate synthetase family. Homodimer. Mg(2+) is required as a cofactor.

Its subcellular location is the cytoplasm. The catalysed reaction is IMP + L-aspartate + GTP = N(6)-(1,2-dicarboxyethyl)-AMP + GDP + phosphate + 2 H(+). The protein operates within purine metabolism; AMP biosynthesis via de novo pathway; AMP from IMP: step 1/2. Its function is as follows. Plays an important role in the de novo pathway of purine nucleotide biosynthesis. Catalyzes the first committed step in the biosynthesis of AMP from IMP. The sequence is that of Adenylosuccinate synthetase from Syntrophus aciditrophicus (strain SB).